Here is a 121-residue protein sequence, read N- to C-terminus: Large ribosomal subunit protein eL18 (121 aa).

The protein belongs to the eukaryotic ribosomal protein eL18 family.

The chain is Large ribosomal subunit protein eL18 from Methanosphaerula palustris (strain ATCC BAA-1556 / DSM 19958 / E1-9c).